A 332-amino-acid chain; its full sequence is 2-hydroxyacid dehydrogenase homolog 1 (332 aa).

NAD(+) is bound by residues 154-155, 233-235, and aspartate 259; these read RI and TSR. Residue arginine 235 is part of the active site. Residue glutamate 264 is part of the active site. The active-site Proton donor is the histidine 296. 296 to 299 contacts NAD(+); that stretch reads HQAF.

It belongs to the D-isomer specific 2-hydroxyacid dehydrogenase family.

Its subcellular location is the cytoplasm. It is found in the nucleus. This is 2-hydroxyacid dehydrogenase homolog 1 from Schizosaccharomyces pombe (strain 972 / ATCC 24843) (Fission yeast).